Here is a 954-residue protein sequence, read N- to C-terminus: Glycine dehydrogenase (decarboxylating) (954 aa).

Position 702 is an N6-(pyridoxal phosphate)lysine (Lys702).

The protein belongs to the GcvP family. As to quaternary structure, the glycine cleavage system is composed of four proteins: P, T, L and H. Requires pyridoxal 5'-phosphate as cofactor.

The enzyme catalyses N(6)-[(R)-lipoyl]-L-lysyl-[glycine-cleavage complex H protein] + glycine + H(+) = N(6)-[(R)-S(8)-aminomethyldihydrolipoyl]-L-lysyl-[glycine-cleavage complex H protein] + CO2. Functionally, the glycine cleavage system catalyzes the degradation of glycine. The P protein binds the alpha-amino group of glycine through its pyridoxal phosphate cofactor; CO(2) is released and the remaining methylamine moiety is then transferred to the lipoamide cofactor of the H protein. This Xanthomonas euvesicatoria pv. vesicatoria (strain 85-10) (Xanthomonas campestris pv. vesicatoria) protein is Glycine dehydrogenase (decarboxylating).